A 54-amino-acid polypeptide reads, in one-letter code: Putative ankyrin repeat protein RC0701 (54 aa).

An ANK repeat occupies 17–46 (SGKTPLDWYSDYNATKIVETLIKNGGNVSS).

This chain is Putative ankyrin repeat protein RC0701, found in Rickettsia conorii (strain ATCC VR-613 / Malish 7).